The following is a 251-amino-acid chain: uncharacterized protein (251 aa).

12–36 contributes to the NADP(+) binding site; the sequence is VVTGASSGIGEATARTLAAQGFHVV. Serine 136 serves as a coordination point for substrate. Residue tyrosine 149 is the Proton acceptor of the active site.

Belongs to the short-chain dehydrogenases/reductases (SDR) family.

This is an uncharacterized protein from Mycobacterium tuberculosis (strain CDC 1551 / Oshkosh).